The sequence spans 249 residues: Triosephosphate isomerase (249 aa).

Substrate contacts are provided by Asn-12 and Lys-14. Lys-14 bears the N6-acetyllysine mark. Ser-21 bears the Phosphoserine mark. At Tyr-68 the chain carries 3'-nitrotyrosine. Ser-80 carries the post-translational modification Phosphoserine. The active-site Electrophile is His-96. Ser-106 carries the phosphoserine modification. Lys-142 participates in a covalent cross-link: Glycyl lysine isopeptide (Lys-Gly) (interchain with G-Cter in SUMO1). Lys-149 bears the N6-succinyllysine mark. Lys-156 carries the N6-acetyllysine; alternate modification. Lys-156 is subject to N6-succinyllysine; alternate. Ser-159 is subject to Phosphoserine. The active-site Proton acceptor is Glu-166. Thr-173 is subject to Phosphothreonine. Lys-194 carries the N6-acetyllysine; alternate modification. Lys-194 is subject to N6-succinyllysine; alternate. Lys-194 carries the N6-methyllysine; alternate modification. Position 198 is a phosphoserine (Ser-198). The residue at position 209 (Tyr-209) is a 3'-nitrotyrosine. A Phosphoserine modification is found at Ser-212. At Thr-214 the chain carries Phosphothreonine. Ser-223 is subject to Phosphoserine. Lys-238 is modified (N6-acetyllysine).

This sequence belongs to the triosephosphate isomerase family. Homodimer.

It is found in the cytoplasm. It carries out the reaction D-glyceraldehyde 3-phosphate = dihydroxyacetone phosphate. It catalyses the reaction dihydroxyacetone phosphate = methylglyoxal + phosphate. It functions in the pathway carbohydrate degradation; glycolysis; D-glyceraldehyde 3-phosphate from glycerone phosphate: step 1/1. The protein operates within carbohydrate biosynthesis; gluconeogenesis. In terms of biological role, triosephosphate isomerase is an extremely efficient metabolic enzyme that catalyzes the interconversion between dihydroxyacetone phosphate (DHAP) and D-glyceraldehyde-3-phosphate (G3P) in glycolysis and gluconeogenesis. Functionally, it is also responsible for the non-negligible production of methylglyoxal a reactive cytotoxic side-product that modifies and can alter proteins, DNA and lipids. This chain is Triosephosphate isomerase (TPI1), found in Homo sapiens (Human).